We begin with the raw amino-acid sequence, 406 residues long: Cysteine--tRNA ligase (406 aa).

Zn(2+) is bound at residue C16. Positions 18–28 (PTVYSDVHIGN) match the 'HIGH' region motif. Residues C192, H218, and E222 each contribute to the Zn(2+) site. A 'KMSKS' region motif is present at residues 250–254 (KMAKS). Position 253 (K253) interacts with ATP.

It belongs to the class-I aminoacyl-tRNA synthetase family. Monomer. Requires Zn(2+) as cofactor.

The protein resides in the cytoplasm. The catalysed reaction is tRNA(Cys) + L-cysteine + ATP = L-cysteinyl-tRNA(Cys) + AMP + diphosphate. This is Cysteine--tRNA ligase from Mesomycoplasma hyopneumoniae (strain J / ATCC 25934 / NCTC 10110) (Mycoplasma hyopneumoniae).